The sequence spans 410 residues: DNA primase small subunit (410 aa).

Active-site residues include Glu43, Asp106, and Asp108. A Zinc knuckle motif motif is present at residues 118-129 (CCKDATVCPKCW).

The protein belongs to the eukaryotic-type primase small subunit family. In terms of assembly, heterodimer of a small subunit and a large subunit.

DNA primase is the polymerase that synthesizes small RNA primers for the Okazaki fragments made during discontinuous DNA replication. This is DNA primase small subunit (pri-1) from Caenorhabditis elegans.